Consider the following 394-residue polypeptide: Ketoisovalerate oxidoreductase subunit VorA (394 aa).

Heterotetramer of one alpha, one beta, one delta and one gamma chain.

It catalyses the reaction 3-methyl-2-oxobutanoate + 2 oxidized [2Fe-2S]-[ferredoxin] + CoA = 2-methylpropanoyl-CoA + 2 reduced [2Fe-2S]-[ferredoxin] + CO2 + H(+). This is Ketoisovalerate oxidoreductase subunit VorA (vorA) from Pyrococcus furiosus (strain ATCC 43587 / DSM 3638 / JCM 8422 / Vc1).